Consider the following 565-residue polypeptide: Probable protease Gilli_2517 (565 aa).

In terms of biological role, probably a dedicated protease for substrate gasdermin bGSDM; cleaves the bGSDM precursor, releasing the pore-forming moiety, which integrates into the membrane and triggers cell death. Involved in defense against bacteriophages. Expression of bGSDM and this neighboring protease is not toxic in E.coli. The protein is Probable protease Gilli_2517 of Gillisia limnaea (strain DSM 15749 / LMG 21470 / R-8282).